A 339-amino-acid chain; its full sequence is Ketol-acid reductoisomerase (NADP(+)) (339 aa).

The KARI N-terminal Rossmann domain maps to 1-182; that stretch reads MRVYYDRDAD…GGGRSGIIET (182 aa). Residues 24-27, lysine 48, serine 51, threonine 53, and 83-86 contribute to the NADP(+) site; these read YGSQ and DELQ. The active site involves histidine 108. Glycine 134 contacts NADP(+). In terms of domain architecture, KARI C-terminal knotted spans 183 to 328; that stretch reads NFREECETDL…AKLRGMMPWI (146 aa). Mg(2+)-binding residues include aspartate 191, glutamate 195, glutamate 227, and glutamate 231. Serine 252 is a substrate binding site.

It belongs to the ketol-acid reductoisomerase family. Mg(2+) is required as a cofactor.

It catalyses the reaction (2R)-2,3-dihydroxy-3-methylbutanoate + NADP(+) = (2S)-2-acetolactate + NADPH + H(+). The catalysed reaction is (2R,3R)-2,3-dihydroxy-3-methylpentanoate + NADP(+) = (S)-2-ethyl-2-hydroxy-3-oxobutanoate + NADPH + H(+). Its pathway is amino-acid biosynthesis; L-isoleucine biosynthesis; L-isoleucine from 2-oxobutanoate: step 2/4. It participates in amino-acid biosynthesis; L-valine biosynthesis; L-valine from pyruvate: step 2/4. Involved in the biosynthesis of branched-chain amino acids (BCAA). Catalyzes an alkyl-migration followed by a ketol-acid reduction of (S)-2-acetolactate (S2AL) to yield (R)-2,3-dihydroxy-isovalerate. In the isomerase reaction, S2AL is rearranged via a Mg-dependent methyl migration to produce 3-hydroxy-3-methyl-2-ketobutyrate (HMKB). In the reductase reaction, this 2-ketoacid undergoes a metal-dependent reduction by NADPH to yield (R)-2,3-dihydroxy-isovalerate. The sequence is that of Ketol-acid reductoisomerase (NADP(+)) from Rhizobium johnstonii (strain DSM 114642 / LMG 32736 / 3841) (Rhizobium leguminosarum bv. viciae).